The sequence spans 207 residues: Strobilurin A biosynthesis cluster protein r1 (207 aa).

Helical transmembrane passes span 108-128 and 169-189; these read FIFP…LLYL and NLTT…PFWI.

The protein resides in the membrane. Its pathway is mycotoxin biosynthesis. Part of the gene cluster that mediates the biosynthesis of strobilurin A, an antifungal polyketide that contains a key beta-methoxyacrylate toxophore that targets the complex III of the mitochondrial electron transport chain. Strobilurin biosynthesis begins with construction of benzoyl CoA by step-wise elimination of ammonia from phenylalanine by the phenylalanine ammonia-lyase str11, oxygenation by str8 and retro-Claisen reaction to form benzoic acid, which is activated to its CoA thiolester benzoyl CoA by the dedicated CoA ligase str10. Benzoyl CoA forms the starter unit for the highly reducing polyketide synthase stpks1 that produces the polyketide prestrobilutin A. The FAD-dependent oxygenase str9 then catalyzes the key oxidative rearrangement responsible for the creation of the beta-methoxyacrylate toxophore. Str9 performs epoxidation of the 2,3 olefin of prestrobilutin A, followed by Meinwald rearrangement to furnish the aldehyde intermediate. Rapid enolization of the aldehyde intermediate would give the beta-methoxyacrylate skeleton and methylations catalyzed by str2 and str3 complete the synthesis and lead to the production of strobilurin A. The short-chain dehydrogenase stl2 and the dehydrogenase str4 play a role in the shunt pathway leading to the production of bolineol. The cluster encodes no obvious halogenase gene that could be involved in production of strobilurin B, nor any obvious dimethylallyl-transferase that could be involved in the production of strobilurin G. It is possible that unknown proteins encoded in, or near, the cluster (such as str1 or stl1) may form new classes of halogenases or dimethylally-transferases, or that the responsible genes are located elsewhere on the genome. Similarly, proteins encoded by str5/str6 hydrolases appear to have no chemical role in the biosynthesis of strobilurin A. Finally, no obvious self-resistance gene is found within the cluster. This chain is Strobilurin A biosynthesis cluster protein r1, found in Strobilurus tenacellus.